Here is a 171-residue protein sequence, read N- to C-terminus: Large ribosomal subunit protein uL10 (171 aa).

The protein belongs to the universal ribosomal protein uL10 family. As to quaternary structure, part of the ribosomal stalk of the 50S ribosomal subunit. The N-terminus interacts with L11 and the large rRNA to form the base of the stalk. The C-terminus forms an elongated spine to which L12 dimers bind in a sequential fashion forming a multimeric L10(L12)X complex.

Forms part of the ribosomal stalk, playing a central role in the interaction of the ribosome with GTP-bound translation factors. The sequence is that of Large ribosomal subunit protein uL10 from Paramagnetospirillum magneticum (strain ATCC 700264 / AMB-1) (Magnetospirillum magneticum).